Reading from the N-terminus, the 294-residue chain is Farnesyl diphosphate synthase (294 aa).

Isopentenyl diphosphate-binding residues include K45, R48, and H77. D84 and D90 together coordinate Mg(2+). R95 is a binding site for (2E)-geranyl diphosphate. R96 is a binding site for isopentenyl diphosphate. (2E)-geranyl diphosphate contacts are provided by K181, T182, and Q220.

This sequence belongs to the FPP/GGPP synthase family. It depends on Mg(2+) as a cofactor.

The protein localises to the cytoplasm. The catalysed reaction is isopentenyl diphosphate + (2E)-geranyl diphosphate = (2E,6E)-farnesyl diphosphate + diphosphate. The protein is Farnesyl diphosphate synthase (ispA) of Buchnera aphidicola subsp. Schizaphis graminum (strain Sg).